A 197-amino-acid chain; its full sequence is dITP/XTP pyrophosphatase (197 aa).

9-14 (TNNLNK) contributes to the substrate binding site. Mg(2+)-binding residues include Glu-42 and Asp-71. The Proton acceptor role is filled by Asp-71. Residues Ser-72, 153–156 (FGYD), Lys-176, and 181–182 (HR) each bind substrate.

It belongs to the HAM1 NTPase family. As to quaternary structure, homodimer. Mg(2+) is required as a cofactor.

It carries out the reaction XTP + H2O = XMP + diphosphate + H(+). The catalysed reaction is dITP + H2O = dIMP + diphosphate + H(+). The enzyme catalyses ITP + H2O = IMP + diphosphate + H(+). Functionally, pyrophosphatase that catalyzes the hydrolysis of nucleoside triphosphates to their monophosphate derivatives, with a high preference for the non-canonical purine nucleotides XTP (xanthosine triphosphate), dITP (deoxyinosine triphosphate) and ITP. Seems to function as a house-cleaning enzyme that removes non-canonical purine nucleotides from the nucleotide pool, thus preventing their incorporation into DNA/RNA and avoiding chromosomal lesions. This chain is dITP/XTP pyrophosphatase, found in Leptospira interrogans serogroup Icterohaemorrhagiae serovar copenhageni (strain Fiocruz L1-130).